We begin with the raw amino-acid sequence, 398 residues long: MSKEKVILAYSGGLDTSVAITWLKKDYDVVAVCMDVGEGKDLDFIHDKALKVGAVESYVIDVKDEFATDYVLVAHQSHAYYEQKYPLVSALSRPLISKKLVEIAHQIGATTIAHGCTGKGNDQVRFEVSIAALDLNLKVIAPVREWKWSREEEIYYAKENGVPVPADLDNPYSVDQNLWGRANECGILENPWNQAPEEAFGITTSPEQAPDMPEYIEIEFSEGVPVSLNGEVLKLADLIQKLNEIAGKHGVGRIDHVENRLVGIKSREIYECPGAVTLLTAHKEIEDLTLVREVAHFKPIIENELSNLIYNALWFSSATQALIAYIKETQKVVNGTAKVKLYKGSAQVVARKSPSSLYDENLATYTSADTFDQDAAVGFIKLWGLPTKVHSEVQKSAK.

Residue 9-17 (AYSGGLDTS) coordinates ATP. L-citrulline is bound at residue Y85. G115 serves as a coordination point for ATP. Residues T117, N121, and D122 each coordinate L-aspartate. N121 serves as a coordination point for L-citrulline. Residues R125, S173, E258, and Y270 each coordinate L-citrulline.

Belongs to the argininosuccinate synthase family. Type 1 subfamily. Homotetramer.

The protein localises to the cytoplasm. It carries out the reaction L-citrulline + L-aspartate + ATP = 2-(N(omega)-L-arginino)succinate + AMP + diphosphate + H(+). The protein operates within amino-acid biosynthesis; L-arginine biosynthesis; L-arginine from L-ornithine and carbamoyl phosphate: step 2/3. The chain is Argininosuccinate synthase from Streptococcus pneumoniae (strain ATCC BAA-255 / R6).